The primary structure comprises 343 residues: MTQEKHNAAILGGGSFGTAMASILAANGHNVNLWVRDPETAAAINIDRENTRYLPGAELPKEVTATDSLEEALGGASMVFVAIPSKAFAEVLEQARQWVPDEAVVISCTKGIYADGFLLMSELLHQYWPHTRIGVLSGPNLAKEVVEQKFTGTVIASPDETLRQTVQNALSCDYFRVYDNPDIYGVELGGALKNIYAVASGMAAAIGVGENSRSFLITRALAEMSRFAVKLGANPMTFLGLSGVGDLIATCTSSLSRNYQVGFQLGEGKTLEQAIECLGQTAEGINTIKLVADKAAELDVYMPLATALYKIVYHGQPLELMIQNLMSGEYKHDVEFQLGAFTS.

S15, F16, R36, and K110 together coordinate NADPH. Sn-glycerol 3-phosphate is bound by residues K110 and G138. A142 contacts NADPH. Sn-glycerol 3-phosphate-binding residues include K193, D246, S256, R257, and N258. The active-site Proton acceptor is K193. Residue R257 participates in NADPH binding. Residue E283 participates in NADPH binding.

The protein belongs to the NAD-dependent glycerol-3-phosphate dehydrogenase family.

It is found in the cytoplasm. It carries out the reaction sn-glycerol 3-phosphate + NAD(+) = dihydroxyacetone phosphate + NADH + H(+). The catalysed reaction is sn-glycerol 3-phosphate + NADP(+) = dihydroxyacetone phosphate + NADPH + H(+). Its pathway is membrane lipid metabolism; glycerophospholipid metabolism. Functionally, catalyzes the reduction of the glycolytic intermediate dihydroxyacetone phosphate (DHAP) to sn-glycerol 3-phosphate (G3P), the key precursor for phospholipid synthesis. The sequence is that of Glycerol-3-phosphate dehydrogenase [NAD(P)+] from Alcanivorax borkumensis (strain ATCC 700651 / DSM 11573 / NCIMB 13689 / SK2).